Consider the following 225-residue polypeptide: Agamous-like MADS-box protein MADS1 (225 aa).

Expressed in flowers and seeds.

Its subcellular location is the nucleus. In terms of biological role, probable transcription factor involved in flower development. This is Agamous-like MADS-box protein MADS1 from Vitis vinifera (Grape).